The sequence spans 723 residues: Peroxisomal bifunctional enzyme (723 aa).

The segment at Met1 to Ser282 is enoyl-CoA hydratase / isomerase. Lys38 bears the N6-succinyllysine mark. Gly101 provides a ligand contact to substrate. Lys165 is subject to N6-acetyllysine; alternate. Lys165 is subject to N6-succinyllysine; alternate. Residue Lys171 is modified to N6-acetyllysine. An N6-acetyllysine; alternate modification is found at Lys219. Lys219 carries the post-translational modification N6-succinyllysine; alternate. At Lys250 the chain carries N6-acetyllysine. An N6-succinyllysine mark is found at Lys280 and Lys290. Positions Thr283–Gly572 are 3-hydroxyacyl-CoA dehydrogenase. An N6-acetyllysine mark is found at Lys346, Lys350, and Lys464. Lys532 carries the post-translational modification N6-succinyllysine. Thr548 carries the phosphothreonine modification. Lys577 is modified (N6-succinyllysine). An N6-acetyllysine; alternate mark is found at Lys584, Lys591, and Lys710. Residues Lys584, Lys591, and Lys710 each carry the N6-succinyllysine; alternate modification. Positions Lys699–Leu723 are disordered. The segment covering Ser703–Leu723 has biased composition (polar residues). Position 718 is a phosphoserine (Ser718). A Microbody targeting signal motif is present at residues Ser721–Leu723. N6-succinyllysine is present on Lys722.

It in the N-terminal section; belongs to the enoyl-CoA hydratase/isomerase family. The protein in the C-terminal section; belongs to the 3-hydroxyacyl-CoA dehydrogenase family. Monomer. Acetylated, leading to enhanced enzyme activity. Acetylation is enhanced by up to 80% after treatment either with trichostin A (TSA) or with nicotinamide (NAM) with highest increase on Lys-346. Acetylation and enzyme activity increased by about 1.5% on addition of fatty acids.

The protein resides in the peroxisome. The enzyme catalyses a (3S)-3-hydroxyacyl-CoA = a (2E)-enoyl-CoA + H2O. The catalysed reaction is a 4-saturated-(3S)-3-hydroxyacyl-CoA = a (3E)-enoyl-CoA + H2O. It catalyses the reaction a (3Z)-enoyl-CoA = a 4-saturated (2E)-enoyl-CoA. It carries out the reaction a (3E)-enoyl-CoA = a 4-saturated (2E)-enoyl-CoA. The enzyme catalyses a (3S)-3-hydroxyacyl-CoA + NAD(+) = a 3-oxoacyl-CoA + NADH + H(+). The catalysed reaction is (2S,3S)-3-hydroxy-2-methylbutanoyl-CoA = (2E)-2-methylbut-2-enoyl-CoA + H2O. It catalyses the reaction (3S)-hydroxyhexadecanoyl-CoA + NAD(+) = 3-oxohexadecanoyl-CoA + NADH + H(+). It carries out the reaction (3S)-hydroxyhexadecanoyl-CoA = (2E)-hexadecenoyl-CoA + H2O. The enzyme catalyses (2E)-hexadecenedioyl-CoA + H2O = (3S)-hydroxyhexadecanedioyl-CoA. The catalysed reaction is (3S)-hydroxyhexadecanedioyl-CoA + NAD(+) = 3-oxohexadecanedioyl-CoA + NADH + H(+). It catalyses the reaction (3E,5Z)-tetradecadienoyl-CoA = (2E,5Z)-tetradecadienoyl-CoA. It carries out the reaction (3E,5Z)-octadienoyl-CoA = (2E,5Z)-octadienoyl-CoA. The enzyme catalyses (3S)-hydroxydecanoyl-CoA + NAD(+) = 3-oxodecanoyl-CoA + NADH + H(+). The catalysed reaction is (3E)-decenoyl-CoA = (2E)-decenoyl-CoA. It catalyses the reaction (3Z)-hexenoyl-CoA = (2E)-hexenoyl-CoA. It carries out the reaction (3E)-hexenoyl-CoA = (2E)-hexenoyl-CoA. The enzyme catalyses (3S)-hydroxydecanoyl-CoA = (2E)-decenoyl-CoA + H2O. The catalysed reaction is (3S)-hydroxyhexanoyl-CoA = (2E)-hexenoyl-CoA + H2O. Its pathway is lipid metabolism; fatty acid beta-oxidation. With respect to regulation, enzyme activity enhanced by acetylation. Functionally, peroxisomal trifunctional enzyme possessing 2-enoyl-CoA hydratase, 3-hydroxyacyl-CoA dehydrogenase, and delta 3, delta 2-enoyl-CoA isomerase activities. Catalyzes two of the four reactions of the long chain fatty acids peroxisomal beta-oxidation pathway. Can also use branched-chain fatty acids such as 2-methyl-2E-butenoyl-CoA as a substrate, which is hydrated into (2S,3S)-3-hydroxy-2-methylbutanoyl-CoA. Optimal isomerase for 2,5 double bonds into 3,5 form isomerization in a range of enoyl-CoA species. Also able to isomerize both 3-cis and 3-trans double bonds into the 2-trans form in a range of enoyl-CoA species. Regulates the amount of medium-chain dicarboxylic fatty acids which are essential regulators of all fatty acid oxidation pathways. Also involved in the degradation of long-chain dicarboxylic acids through peroxisomal beta-oxidation. This Pongo abelii (Sumatran orangutan) protein is Peroxisomal bifunctional enzyme (EHHADH).